The primary structure comprises 560 residues: Serine palmitoyltransferase 2 (560 aa).

The chain crosses the membrane as a helical span at residues 65–85 (PMLVAVLTYVGYGVLTLFGYL). Position 377 is an N6-(pyridoxal phosphate)lysine (K377).

This sequence belongs to the class-II pyridoxal-phosphate-dependent aminotransferase family. As to quaternary structure, component of the serine palmitoyltransferase (SPT) complex, which is composed of SPTLC1, SPTLC2 or SPTLC3 and SPTSSA or SPTSSB. The heterodimer consisting of SPTLC1 and SPTLC2/SPTLC3 forms the catalytic core of the enzyme, while SPTSSA or SPTSSB subunits determine substrate specificity. SPT also interacts with ORMDL proteins, especially ORMDL3, which negatively regulate SPT activity in the presence of ceramides. Forms dimers of heterodimers with SPTLC1. The cofactor is pyridoxal 5'-phosphate. In terms of tissue distribution, expressed in astrocytes.

The protein resides in the endoplasmic reticulum membrane. It carries out the reaction L-serine + hexadecanoyl-CoA + H(+) = 3-oxosphinganine + CO2 + CoA. It catalyses the reaction octadecanoyl-CoA + L-serine + H(+) = 3-oxoeicosasphinganine + CO2 + CoA. Its pathway is lipid metabolism; sphingolipid metabolism. SPT complex catalytic activity is negatively regulated by ORMDL proteins, including ORMDL3, in the presence of ceramides. This mechanism allows to maintain ceramide levels at sufficient concentrations for the production of complex sphingolipids, but which prevents the accumulation of ceramides to levels that trigger apoptosis. Functionally, component of the serine palmitoyltransferase multisubunit enzyme (SPT) that catalyzes the initial and rate-limiting step in sphingolipid biosynthesis by condensing L-serine and activated acyl-CoA (most commonly palmitoyl-CoA) to form long-chain bases. The SPT complex is composed of SPTLC1, SPTLC2 or SPTLC3 and SPTSSA or SPTSSB. Within this complex, the heterodimer consisting of SPTLC1 and SPTLC2/SPTLC3 forms the catalytic core. The composition of the serine palmitoyltransferase (SPT) complex determines the substrate preference. The SPTLC1-SPTLC2-SPTSSA complex shows a strong preference for C16-CoA substrate, while the SPTLC1-SPTLC3-SPTSSA isozyme uses both C14-CoA and C16-CoA as substrates, with a slight preference for C14-CoA. The SPTLC1-SPTLC2-SPTSSB complex shows a strong preference for C18-CoA substrate, while the SPTLC1-SPTLC3-SPTSSB isozyme displays an ability to use a broader range of acyl-CoAs, without apparent preference. Crucial for adipogenesis. This is Serine palmitoyltransferase 2 from Rattus norvegicus (Rat).